The sequence spans 177 residues: Ribonuclease alpha-sarcin (177 aa).

An N-terminal signal peptide occupies residues 1-27; the sequence is MVAIKNLVLVALTAVTALAVPSPLEAR. Cystine bridges form between C33/C175 and C103/C159. H77 is a catalytic residue. Residues 86-119 form a disordered region; the sequence is DGKLPKGRTPIKFGKSDCDRPPKHSKDGNGKTDH. Residues 99–119 are compositionally biased toward basic and acidic residues; sequence GKSDCDRPPKHSKDGNGKTDH. E123 serves as the catalytic Proton acceptor. H164 (proton donor) is an active-site residue.

The protein belongs to the ribonuclease U2 family.

It is found in the secreted. The catalysed reaction is a 28S rRNA containing guanosine-adenosine pair + H2O = an [RNA fragment]-3'-adenosine-3'-phosphate + a 5'-a hydroxy-guanosine-3'-[RNA fragment].. Functionally, alpha-sarcin is specific for purines in both single- and double-stranded RNA. Its toxic action on eukaryotic cells is the result of cleavage of a single phosphodiester bond in the 60S subunit of ribosomes. Inhibits both the EFl (elongation factor 1)-dependent binding of aminoacyl-tRNA and the GTP-dependent binding of EF2 (elongation factor 2) to ribosomes. The chain is Ribonuclease alpha-sarcin (sar) from Aspergillus giganteus.